The sequence spans 1127 residues: Elongation factor-like GTPase 1 (1127 aa).

The 256-residue stretch at 17 to 272 (ANIRNICVLA…LLKTLWGDYY (256 aa)) folds into the tr-type G domain. Residues 26–33 (AHVDHGKT), 92–96 (DSPGH), and 146–149 (NKID) each bind GTP. Residues 429–496 (KPRPLTQEEM…VASVSRQPVS (68 aa)) are disordered. Composition is skewed to basic and acidic residues over residues 438–452 (MAQRRERARQRHAEK) and 474–484 (SPHEDEPRGDE). The residue at position 528 (Lys528) is an N6-acetyllysine.

This sequence belongs to the TRAFAC class translation factor GTPase superfamily. Classic translation factor GTPase family. Associates with the 60S ribosomal subunit. Found in a complex consisting of the 60S ribosomal subunit, SBDS and EFL1.

The enzyme catalyses GTP + H2O = GDP + phosphate + H(+). Its activity is regulated as follows. GTPase activity is stimulated in the presence of 60S ribosome subunits. In terms of biological role, GTPase involved in the biogenesis of the 60S ribosomal subunit and translational activation of ribosomes. Together with SBDS, triggers the GTP-dependent release of EIF6 from 60S pre-ribosomes in the cytoplasm, thereby activating ribosomes for translation competence by allowing 80S ribosome assembly and facilitating EIF6 recycling to the nucleus, where it is required for 60S rRNA processing and nuclear export. This chain is Elongation factor-like GTPase 1 (Efl1), found in Mus musculus (Mouse).